The primary structure comprises 305 residues: uncharacterized protein (305 aa).

The N-terminal stretch at 1–29 (MSKAVSEILGYMYIFGIVMAVLAIVFVQV) is a signal peptide.

This is an uncharacterized protein from Archaeoglobus fulgidus (strain ATCC 49558 / DSM 4304 / JCM 9628 / NBRC 100126 / VC-16).